A 365-amino-acid polypeptide reads, in one-letter code: Probable caffeine synthase 4 (365 aa).

Tyrosine 18 contacts S-adenosyl-L-homocysteine. Position 25 (threonine 25) interacts with caffeine. S-adenosyl-L-homocysteine-binding residues include cysteine 61, asparagine 66, aspartate 98, leucine 99, serine 134, and phenylalanine 135. Positions 152, 155, and 156 each coordinate caffeine. Residues asparagine 173, aspartate 259, phenylalanine 261, and asparagine 262 each contribute to the Mg(2+) site. Residue phenylalanine 317 coordinates caffeine.

The protein belongs to the methyltransferase superfamily. Type-7 methyltransferase family. It depends on Mg(2+) as a cofactor.

The protein operates within alkaloid biosynthesis. May be involved in the biosynthesis of caffeine. The polypeptide is Probable caffeine synthase 4 (Camellia sinensis (Tea plant)).